Reading from the N-terminus, the 342-residue chain is Phosphoribosylformylglycinamidine cyclo-ligase (342 aa).

The protein belongs to the AIR synthase family.

The protein localises to the cytoplasm. It carries out the reaction 2-formamido-N(1)-(5-O-phospho-beta-D-ribosyl)acetamidine + ATP = 5-amino-1-(5-phospho-beta-D-ribosyl)imidazole + ADP + phosphate + H(+). The protein operates within purine metabolism; IMP biosynthesis via de novo pathway; 5-amino-1-(5-phospho-D-ribosyl)imidazole from N(2)-formyl-N(1)-(5-phospho-D-ribosyl)glycinamide: step 2/2. This is Phosphoribosylformylglycinamidine cyclo-ligase from Staphylococcus aureus (strain MRSA252).